The chain runs to 229 residues: 2-C-methyl-D-erythritol 4-phosphate cytidylyltransferase (229 aa).

Belongs to the IspD/TarI cytidylyltransferase family. IspD subfamily. In terms of assembly, homodimer.

The catalysed reaction is 2-C-methyl-D-erythritol 4-phosphate + CTP + H(+) = 4-CDP-2-C-methyl-D-erythritol + diphosphate. It participates in isoprenoid biosynthesis; isopentenyl diphosphate biosynthesis via DXP pathway; isopentenyl diphosphate from 1-deoxy-D-xylulose 5-phosphate: step 2/6. Catalyzes the formation of 4-diphosphocytidyl-2-C-methyl-D-erythritol from CTP and 2-C-methyl-D-erythritol 4-phosphate (MEP). This Wigglesworthia glossinidia brevipalpis protein is 2-C-methyl-D-erythritol 4-phosphate cytidylyltransferase.